The chain runs to 377 residues: MIVTALDPTHPLAAGLTHASRLVRSYQGERQEVTPVWFMRQAGRSLPEYRDLRVGTRMLDVCLDPAMASEITLQPVRRHGVDAGIFFSDIVVPLKLAGVEVEIQPGKGPVFERAVRTSADVDRLSAVDPAALAADTFAAVQEAVRLTTAELNETPLIGFAGAPFTLAAYLVEGGPSKDHLRARTLMHAAPGAWARLMDWTADLSGAFLRAQVLAGASAAQLFDSWAGSLSLRDYAEHAAPASARAFSHVRDLTYTVPSADPDGEAVVRAVPIVHFGVGTGELLPAMHEAGADAIGVDHRTLLDEASRRLGHIVPLQGNADPAMLAAPWEVLSGHALDVLDRGRAAPAHVFNLGHGVPPETDPAVLTRVVELVHGWRA.

Residues 40–44, Asp-89, Tyr-169, Ser-224, and His-354 each bind substrate; that span reads RQAGR.

The protein belongs to the uroporphyrinogen decarboxylase family. In terms of assembly, homodimer.

It localises to the cytoplasm. It carries out the reaction uroporphyrinogen III + 4 H(+) = coproporphyrinogen III + 4 CO2. It participates in porphyrin-containing compound metabolism; protoporphyrin-IX biosynthesis; coproporphyrinogen-III from 5-aminolevulinate: step 4/4. Catalyzes the decarboxylation of four acetate groups of uroporphyrinogen-III to yield coproporphyrinogen-III. This chain is Uroporphyrinogen decarboxylase, found in Leifsonia xyli subsp. xyli (strain CTCB07).